We begin with the raw amino-acid sequence, 518 residues long: F-box protein At1g47056 (518 aa).

One can recognise an F-box domain in the interval proline 37–serine 82.

In Arabidopsis thaliana (Mouse-ear cress), this protein is F-box protein At1g47056.